A 260-amino-acid polypeptide reads, in one-letter code: Chlorocatechol 1,2-dioxygenase (260 aa).

Fe cation contacts are provided by Tyr-130, Tyr-164, His-188, and His-190.

The protein belongs to the intradiol ring-cleavage dioxygenase family. It depends on Fe(3+) as a cofactor.

The enzyme catalyses 3-chlorocatechol + O2 = (2E,4Z)-2-chloromuconate + 2 H(+). The catalysed reaction is 3,5-dichlorocatechol + O2 = (2E,4E)-2,4-dichloromuconate + 2 H(+). It participates in aromatic compound metabolism; 3-chlorocatechol degradation. Preferentially converts 3-chlorocatechol and 3,5-dichlorocatechol as opposed to other chlorinated catechols. Retains diminished activity toward non-chlorinated substrates. The protein is Chlorocatechol 1,2-dioxygenase (clcA) of Pseudomonas putida (Arthrobacter siderocapsulatus).